The following is a 248-amino-acid chain: Caffeoyl-CoA O-methyltransferase 3 (248 aa).

Position 22 (Lys-22) interacts with substrate. S-adenosyl-L-methionine is bound by residues Thr-64, Glu-86, 88–89, Ser-94, Asp-112, and Ala-141; that span reads GV. Substrate is bound at residue Asp-164. Asp-164 contacts a divalent metal cation. Position 166 (Asp-166) interacts with S-adenosyl-L-methionine. Positions 190 and 191 each coordinate a divalent metal cation. Asn-195 contributes to the substrate binding site.

Belongs to the class I-like SAM-binding methyltransferase superfamily. Cation-dependent O-methyltransferase family. CCoAMT subfamily. A divalent metal cation is required as a cofactor. Mostly expressed in petal limbs and tubes, and, at low levels, in stems, roots and leaves.

The protein resides in the cytoplasm. It is found in the cytosol. The catalysed reaction is (E)-caffeoyl-CoA + S-adenosyl-L-methionine = (E)-feruloyl-CoA + S-adenosyl-L-homocysteine + H(+). The enzyme catalyses (E)-5-hydroxyferuloyl-CoA + S-adenosyl-L-methionine = (E)-sinapoyl-CoA + S-adenosyl-L-homocysteine + H(+). The protein operates within aromatic compound metabolism; phenylpropanoid biosynthesis. Involved in the production of floral volatile phenylpropanoids in flowers of fragrant cultivars (e.g. cv. Mitchell and cv. V26) from cinnamic acid, a common precursor with the anthocyanin biosynthesis pathway involved in flower pigmentation. Methylates caffeoyl-CoA to feruloyl-CoA, also able to methylate 5-hydroxyferuloyl-CoA. The sequence is that of Caffeoyl-CoA O-methyltransferase 3 from Petunia hybrida (Petunia).